Consider the following 101-residue polypeptide: MAKTSMVNRDIKREKLAKKYAEKRAALKKIVSSVDATYEEKIDAATKLAKLPRDSSPSRQRNRCELSGRPRGVYSKFGLGRNKLREATMRGDVPGLRKASW.

This sequence belongs to the universal ribosomal protein uS14 family. As to quaternary structure, part of the 30S ribosomal subunit. Contacts proteins S3 and S10.

Binds 16S rRNA, required for the assembly of 30S particles and may also be responsible for determining the conformation of the 16S rRNA at the A site. The polypeptide is Small ribosomal subunit protein uS14 (Stenotrophomonas maltophilia (strain K279a)).